The primary structure comprises 275 residues: Aliphatic sulfonates import ATP-binding protein SsuB 1 (275 aa).

The region spanning 34-260 (ISLTGLEKSF…RHGHPGLCEL (227 aa)) is the ABC transporter domain. 66 to 73 (GKSGCGKS) lines the ATP pocket.

The protein belongs to the ABC transporter superfamily. Aliphatic sulfonates importer (TC 3.A.1.17.2) family. As to quaternary structure, the complex is composed of two ATP-binding proteins (SsuB), two transmembrane proteins (SsuC) and a solute-binding protein (SsuA).

Its subcellular location is the cell inner membrane. The enzyme catalyses ATP + H2O + aliphatic sulfonate-[sulfonate-binding protein]Side 1 = ADP + phosphate + aliphatic sulfonateSide 2 + [sulfonate-binding protein]Side 1.. Functionally, part of the ABC transporter complex SsuABC involved in aliphatic sulfonates import. Responsible for energy coupling to the transport system. This chain is Aliphatic sulfonates import ATP-binding protein SsuB 1, found in Rhizobium johnstonii (strain DSM 114642 / LMG 32736 / 3841) (Rhizobium leguminosarum bv. viciae).